The sequence spans 679 residues: MESTSQDRRATHVITIKPNETVLTAFPYRPHSSLLDFLKGEPRVLGATQILLALIIVGFGTIFALNYIGFSQRLPLVVLTGYPFWGALIFILTGYLTVTDKKSKLLGQGVTGMNVISSLVAITGITFTILSYRHQDKYCQMPSFEEICVFSRTLFIVLFFLPSDVTQNSEQPAPEENDQLQFVLQEEFSSDDSTTNAQSVIFGGYAFFKLTLSRSPLVSQPGNKGREFVPDEQKQSILPSPKFSEEEIEPLPPTLEKKPSENMSIQLDSTFKQMKDEDLQSAIVQPSQMQTKLLQDQAASLQVFPSHSALKLEDISPEDLPSQALPVEGLSEQTMPSKSTSSHVKQSSNLTANDLPPQGILSQDTSSQDMLFHDMTSQDMQSLDMLSQDTPSHAMPPQDIPSQDMLSQALSAHAILPEASTSHIVQFPEIQHLLQQPPDLQPENTEPQNQQILQMSYQDIRSEVMEETKEWKSEEELHRRKSSRRHSLNQQTKALQYLRRHSLDVQAKGQKSSKRHSLDQQSKGWQSPKQKSLDQQIKDWLSPKRHSVDKQAQLNQTKEQLPDQQAEDQQAKGEQYPEGQSKDGQVKDQQTDKEQNSKKQTQDQQTEDQPAQEKKSPKGQFQNVQAEGQQAQVEKVPKLLCQDSESQIQQYQFWQFHKGNLQAGQPRTVNLLAKNPLTG.

4 helical membrane passes run 50 to 70, 76 to 96, 110 to 130, and 141 to 161; these read ILLALIIVGFGTIFALNYIGF, LVVLTGYPFWGALIFILTGYL, VTGMNVISSLVAITGITFTIL, and MPSFEEICVFSRTLFIVLFFL. Disordered stretches follow at residues 218-259, 331-363, 469-491, and 505-633; these read VSQP…EKKP, SEQTMPSKSTSSHVKQSSNLTANDLPPQGILSQ, KEWKSEEELHRRKSSRRHSLNQQ, and VQAK…QAQV. Residues 224 to 234 are compositionally biased toward basic and acidic residues; that stretch reads KGREFVPDEQK. The span at 337 to 348 shows a compositional bias: low complexity; that stretch reads SKSTSSHVKQSS. Residues 469 to 478 show a composition bias toward basic and acidic residues; it reads KEWKSEEELH. Composition is skewed to polar residues over residues 519 to 535 and 550 to 563; these read DQQSKGWQSPKQKSLDQ and KQAQLNQTKEQLPD. A compositionally biased stretch (basic and acidic residues) spans 580–601; it reads QSKDGQVKDQQTDKEQNSKKQT. Residues 619–632 are compositionally biased toward polar residues; sequence GQFQNVQAEGQQAQ.

Belongs to the MS4A family.

The protein resides in the membrane. Functionally, may be involved in signal transduction as a component of a multimeric receptor complex. The sequence is that of Membrane-spanning 4-domains subfamily A member 14 (MS4A14) from Homo sapiens (Human).